We begin with the raw amino-acid sequence, 36 residues long: F420-dependent NADP reductase (36 aa).

Residue 9 to 12 (TGNI) participates in NADP(+) binding.

The protein belongs to the F420-dependent NADP reductase family. As to quaternary structure, homotetramer.

The enzyme catalyses reduced coenzyme F420-(gamma-L-Glu)(n) + NADP(+) = oxidized coenzyme F420-(gamma-L-Glu)(n) + NADPH + 2 H(+). Catalyzes the reduction of NADP(+) with F420H(2) via hydride transfer, and the reverse reaction, i.e. the reduction of F420 with NADPH. In M.organophilum, an alcohol-fermenting methanogen containing an NADP-dependent alcohol dehydrogenase, is probably involved in the regeneration of F420H(2) required for CO(2) reduction to methane. Thus, during growth on alcohol and CO(2), the F420-dependent NADP reductase probably has the function of coupling the NADP-dependent oxidation of the alcohol to the aldehyde with the F420-dependent reduction of CO(2) to methane. The sequence is that of F420-dependent NADP reductase (fno) from Methanogenium organophilum.